Consider the following 100-residue polypeptide: Aspartyl/glutamyl-tRNA(Asn/Gln) amidotransferase subunit C (100 aa).

It belongs to the GatC family. As to quaternary structure, heterotrimer of A, B and C subunits.

It catalyses the reaction L-glutamyl-tRNA(Gln) + L-glutamine + ATP + H2O = L-glutaminyl-tRNA(Gln) + L-glutamate + ADP + phosphate + H(+). The catalysed reaction is L-aspartyl-tRNA(Asn) + L-glutamine + ATP + H2O = L-asparaginyl-tRNA(Asn) + L-glutamate + ADP + phosphate + 2 H(+). Allows the formation of correctly charged Asn-tRNA(Asn) or Gln-tRNA(Gln) through the transamidation of misacylated Asp-tRNA(Asn) or Glu-tRNA(Gln) in organisms which lack either or both of asparaginyl-tRNA or glutaminyl-tRNA synthetases. The reaction takes place in the presence of glutamine and ATP through an activated phospho-Asp-tRNA(Asn) or phospho-Glu-tRNA(Gln). The sequence is that of Aspartyl/glutamyl-tRNA(Asn/Gln) amidotransferase subunit C from Rickettsia felis (strain ATCC VR-1525 / URRWXCal2) (Rickettsia azadi).